The chain runs to 340 residues: Probable dual-specificity RNA methyltransferase RlmN (340 aa).

Glu-91 functions as the Proton acceptor in the catalytic mechanism. The Radical SAM core domain occupies 97 to 326 (HSGRVTACIS…CEIRKEKGTD (230 aa)). The cysteines at positions 104 and 331 are disulfide-linked. The [4Fe-4S] cluster site is built by Cys-111, Cys-115, and Cys-118. Residues 158–159 (GE), Ser-190, 213–215 (SLH), and Asn-289 each bind S-adenosyl-L-methionine. Cys-331 acts as the S-methylcysteine intermediate in catalysis.

It belongs to the radical SAM superfamily. RlmN family. It depends on [4Fe-4S] cluster as a cofactor.

It localises to the cytoplasm. The catalysed reaction is adenosine(2503) in 23S rRNA + 2 reduced [2Fe-2S]-[ferredoxin] + 2 S-adenosyl-L-methionine = 2-methyladenosine(2503) in 23S rRNA + 5'-deoxyadenosine + L-methionine + 2 oxidized [2Fe-2S]-[ferredoxin] + S-adenosyl-L-homocysteine. It catalyses the reaction adenosine(37) in tRNA + 2 reduced [2Fe-2S]-[ferredoxin] + 2 S-adenosyl-L-methionine = 2-methyladenosine(37) in tRNA + 5'-deoxyadenosine + L-methionine + 2 oxidized [2Fe-2S]-[ferredoxin] + S-adenosyl-L-homocysteine. In terms of biological role, specifically methylates position 2 of adenine 2503 in 23S rRNA and position 2 of adenine 37 in tRNAs. The polypeptide is Probable dual-specificity RNA methyltransferase RlmN (Thermosipho melanesiensis (strain DSM 12029 / CIP 104789 / BI429)).